A 133-amino-acid chain; its full sequence is Minor capsid protein VP2 (133 aa).

This sequence belongs to the vesivirus VP2 protein family. In terms of assembly, homooligomer. The portal-like structure consists in 12 copies of VP2. Interacts with capsid protein VP1.

The protein localises to the virion. Its subcellular location is the host cytoplasm. Minor structural protein that forms a portal-like structure at a unique three-fold axis of symmetry, following binding to the host receptor. The channel formed by VP2 may allow the delivery of the viral genome through the host endosomal membrane. The protein is Minor capsid protein VP2 of Canis lupus familiaris (Dog).